The sequence spans 100 residues: MICOS complex subunit MIC12 (100 aa).

A helical membrane pass occupies residues 10–26 (FATISSVAAASLYLYAI).

The protein belongs to the MICOS complex subunit Mic12 family. Component of the mitochondrial contact site and cristae organizing system (MICOS) complex.

Its subcellular location is the mitochondrion inner membrane. Component of the MICOS complex, a large protein complex of the mitochondrial inner membrane that plays crucial roles in the maintenance of crista junctions, inner membrane architecture, and formation of contact sites to the outer membrane. The protein is MICOS complex subunit MIC12 (AIM5) of Vanderwaltozyma polyspora (strain ATCC 22028 / DSM 70294 / BCRC 21397 / CBS 2163 / NBRC 10782 / NRRL Y-8283 / UCD 57-17) (Kluyveromyces polysporus).